The sequence spans 601 residues: Glutathione-regulated potassium-efflux system protein KefB (601 aa).

A run of 13 helical transmembrane segments spans residues 4 to 24 (SDFL…VPLA), 29 to 49 (IGAV…GLGF), 55 to 75 (EILH…GLEL), 87 to 107 (IFGV…GLLM), 115 to 135 (AAVV…LQLM), 152 to 172 (VLLF…LLAG), 177 to 197 (HFDW…LIGG), 207 to 227 (FIAA…LVLG), 230 to 250 (LFMD…GVLL), 268 to 288 (GLLL…GVLY), 291 to 311 (LLWV…VLYL), 324 to 344 (MQFA…FSTA), and 356 to 376 (ALLL…MKLV). The RCK N-terminal domain maps to 400 to 519 (KPQVIVVGFG…AGVTQFSRET (120 aa)).

This sequence belongs to the monovalent cation:proton antiporter 2 (CPA2) transporter (TC 2.A.37) family. KefB subfamily. In terms of assembly, interacts with the regulatory subunit KefG.

The protein resides in the cell inner membrane. Its function is as follows. Pore-forming subunit of a potassium efflux system that confers protection against electrophiles. Catalyzes K(+)/H(+) antiport. The protein is Glutathione-regulated potassium-efflux system protein KefB of Escherichia coli O17:K52:H18 (strain UMN026 / ExPEC).